Reading from the N-terminus, the 325-residue chain is S-adenosylmethionine carrier 1, chloroplastic/mitochondrial (325 aa).

The N-terminal 38 residues, 1 to 38, are a transit peptide targeting the chloroplast and mitochondrion; that stretch reads MAPLTLSVDVKSSSATSHDVSKRVMQSSQLKINKGFFA. Solcar repeat units lie at residues 52 to 124, 133 to 215, and 228 to 310; these read RTLF…TKQK, LSAV…LCLG, and ENAL…TKRT. The next 5 membrane-spanning stretches (helical) occupy residues 55–75, 97–117, 132–152, 230–250, and 285–305; these read FEGFIAGGTAGVVVETALYPI, YSGLAGNIAGVLPASALFVGV, HLSAVAHLTAGAIGGLAASLI, ALIGAFAGALTGAVTTPLDVI, and GIGPRVLWIGIGGSIFFGVLE.

It belongs to the mitochondrial carrier (TC 2.A.29) family. Expressed in seedlings, cotyledons, leaves and flowers. Lower levels of expression in stems and roots. Not detected in senescent leaves, petals and pollen grains.

The protein localises to the mitochondrion membrane. The protein resides in the plastid. It localises to the chloroplast membrane. Its activity is regulated as follows. Inhibited strongly by tannic acid, bromocresol purple, mercuric chloride, mersalyl, p-hydroxymercuribenzoate, S-adenosylhomocysteine, S-adenosylcysteine and adenosylornithine, and to a lesser extent by N-ethylmaleimide, bathophenanthroline and pyridoxal-5'-P. Functionally, transporter involved in exchange reactions through membranes. Has a low uniporter activity. Specifically mediates the transport of S-adenosylmethionine (SAM) and its closest analogs. Probably involved in the uptake of SAM in exchange for S-adenosylhomocysteine (SAHC), which is produced from SAM in the mitochondrial matrix and plastidial stroma by methyltransferase activities. The sequence is that of S-adenosylmethionine carrier 1, chloroplastic/mitochondrial (SAMC1) from Arabidopsis thaliana (Mouse-ear cress).